The primary structure comprises 607 residues: Elongation factor 4 (607 aa).

The tr-type G domain maps to 11–193; it reads EKIRNFSIIA…QIVEKVPAPQ (183 aa). Residues 23-28 and 140-143 each bind GTP; these read DHGKST and NKID.

The protein belongs to the TRAFAC class translation factor GTPase superfamily. Classic translation factor GTPase family. LepA subfamily.

Its subcellular location is the cell membrane. The enzyme catalyses GTP + H2O = GDP + phosphate + H(+). Functionally, required for accurate and efficient protein synthesis under certain stress conditions. May act as a fidelity factor of the translation reaction, by catalyzing a one-codon backward translocation of tRNAs on improperly translocated ribosomes. Back-translocation proceeds from a post-translocation (POST) complex to a pre-translocation (PRE) complex, thus giving elongation factor G a second chance to translocate the tRNAs correctly. Binds to ribosomes in a GTP-dependent manner. The protein is Elongation factor 4 of Lactococcus lactis subsp. cremoris (strain MG1363).